A 353-amino-acid chain; its full sequence is UPF0283 membrane protein YPA_1696 (353 aa).

The next 3 helical transmembrane spans lie at 71–91 (MVTA…VQWV), 101–121 (IALG…GSVV), and 214–234 (ESAL…FIAW).

This sequence belongs to the UPF0283 family.

It localises to the cell inner membrane. This Yersinia pestis bv. Antiqua (strain Antiqua) protein is UPF0283 membrane protein YPA_1696.